The following is a 337-amino-acid chain: Succinylglutamate desuccinylase (337 aa).

Zn(2+)-binding residues include His-59, Glu-62, and His-152. Residue Glu-216 is part of the active site.

This sequence belongs to the AspA/AstE family. Succinylglutamate desuccinylase subfamily. Zn(2+) serves as cofactor.

It catalyses the reaction N-succinyl-L-glutamate + H2O = L-glutamate + succinate. It participates in amino-acid degradation; L-arginine degradation via AST pathway; L-glutamate and succinate from L-arginine: step 5/5. Its function is as follows. Transforms N(2)-succinylglutamate into succinate and glutamate. This chain is Succinylglutamate desuccinylase, found in Ectopseudomonas mendocina (strain ymp) (Pseudomonas mendocina).